The following is a 430-amino-acid chain: Agropine synthesis reductase (430 aa).

Residue 203–227 (LVSGSNRGVGKAIAEDLIAHGYRLS) participates in NAD(+) binding. Serine 333 provides a ligand contact to substrate. Tyrosine 346 acts as the Proton acceptor in catalysis.

This sequence belongs to the short-chain dehydrogenases/reductases (SDR) family.

It participates in opine metabolism; mannopine biosynthesis. Functionally, reduces deoxy-fructosyl-glutamine to mannopine. This Rhizobium rhizogenes (Agrobacterium rhizogenes) protein is Agropine synthesis reductase (mas1).